The chain runs to 124 residues: U-scoloptoxin-Er5d (124 aa).

The N-terminal stretch at 1-22 (MKTNCEFPLLCLLIVLVANVEG) is a signal peptide. Positions 23–94 (EVEDNELKMV…KRLWRNWERR (72 aa)) are excised as a propeptide. RLWRNWE repeat units lie at residues 34–40 (RLWRNWE), 61–67 (RLWRNWE), and 86–92 (RLWRNWE). At glutamine 95 the chain carries Pyrrolidone carboxylic acid. An RLWRNWE 4; approximate repeat occupies 107 to 113 (ELWRNWE). A propeptide spanning residues 112 to 124 (WEDLKRRQVGRFE) is cleaved from the precursor.

Belongs to the scoloptoxin-08 family. As to expression, expressed by the venom gland.

It localises to the secreted. In Ethmostigmus rubripes (Giant centipede), this protein is U-scoloptoxin-Er5d.